A 189-amino-acid chain; its full sequence is MIYAMYGVLEDIENGKLYLNVNEIVYEIVVGDTGYFEDFLNEKIKVFTKMIVNDDEISLYGFSDVLKLKLFEKLILVNKLGPKSALKIITSSDVSYIVSAIVNEDVKTLSTLPGIGPKTAERIILELKDSMKEFDVTLTEKDKKILEAIEALVTLGFSRNQSKKAVTQILKKDDSLDDIIKKALKFLSR.

The segment at 1–63 (MIYAMYGVLE…DDEISLYGFS (63 aa)) is domain I. Residues 64-135 (DVLKLKLFEK…ELKDSMKEFD (72 aa)) are domain II. Positions 135 to 139 (DVTLT) are flexible linker. A domain III region spans residues 140–189 (EKDKKILEAIEALVTLGFSRNQSKKAVTQILKKDDSLDDIIKKALKFLSR).

It belongs to the RuvA family. In terms of assembly, homotetramer. Forms an RuvA(8)-RuvB(12)-Holliday junction (HJ) complex. HJ DNA is sandwiched between 2 RuvA tetramers; dsDNA enters through RuvA and exits via RuvB. An RuvB hexamer assembles on each DNA strand where it exits the tetramer. Each RuvB hexamer is contacted by two RuvA subunits (via domain III) on 2 adjacent RuvB subunits; this complex drives branch migration. In the full resolvosome a probable DNA-RuvA(4)-RuvB(12)-RuvC(2) complex forms which resolves the HJ.

It is found in the cytoplasm. Its function is as follows. The RuvA-RuvB-RuvC complex processes Holliday junction (HJ) DNA during genetic recombination and DNA repair, while the RuvA-RuvB complex plays an important role in the rescue of blocked DNA replication forks via replication fork reversal (RFR). RuvA specifically binds to HJ cruciform DNA, conferring on it an open structure. The RuvB hexamer acts as an ATP-dependent pump, pulling dsDNA into and through the RuvAB complex. HJ branch migration allows RuvC to scan DNA until it finds its consensus sequence, where it cleaves and resolves the cruciform DNA. The protein is Holliday junction branch migration complex subunit RuvA of Thermosipho melanesiensis (strain DSM 12029 / CIP 104789 / BI429).